A 188-amino-acid polypeptide reads, in one-letter code: Mitochondrial import receptor subunit TOM20-1 (188 aa).

Residues 1 to 164 lie on the Cytoplasmic side of the membrane; the sequence is MDKLNFFEEI…VVKNKKSSDE (164 aa). The chain crosses the membrane as a helical span at residues 165–182; that stretch reads KYIVMGWVILAIGVVACI. Topologically, residues 183 to 188 are mitochondrial intermembrane; that stretch reads SFRKLR.

It belongs to the Tom20 family. In terms of assembly, forms part of the preprotein translocase complex of the outer mitochondrial membrane (TOM complex) which consists of at least 6 different proteins (TOM5, TOM6, TOM7, TOM20, TOM22/TOM9 and TOM40). Component of a mitochondrial large protein complex that contains, at least, MIC60, DGS1, TOM40, TOM20 proteins, and petC/RISP. In terms of tissue distribution, barely detected in roots.

The protein resides in the mitochondrion outer membrane. Functionally, central component of the receptor complex responsible for the recognition and translocation of cytosolically synthesized mitochondrial preproteins. Together with TOM22 functions as the transit peptide receptor at the surface of the mitochondrion outer membrane and facilitates the movement of preproteins into the translocation pore. The sequence is that of Mitochondrial import receptor subunit TOM20-1 from Arabidopsis thaliana (Mouse-ear cress).